Reading from the N-terminus, the 282-residue chain is HTH-type transcriptional activator RhaR (282 aa).

In terms of domain architecture, HTH araC/xylS-type spans 179–277 (DKLITRLAAS…GMTPSQWRHL (99 aa)). DNA-binding regions (H-T-H motif) lie at residues 196–217 (DKFC…RQQT) and 244–267 (ISDI…TRET).

Binds DNA as a dimer.

The protein resides in the cytoplasm. Its function is as follows. Activates expression of the rhaSR operon in response to L-rhamnose. The sequence is that of HTH-type transcriptional activator RhaR from Escherichia coli O1:K1 / APEC.